A 170-amino-acid polypeptide reads, in one-letter code: Protein SprT (170 aa).

In terms of domain architecture, SprT-like spans 19–163 (REKLQQANLR…RCLHCGTSLR (145 aa)). Histidine 78 contacts Zn(2+). Glutamate 79 is a catalytic residue. Zn(2+) is bound at residue histidine 82.

The protein belongs to the SprT family. Zn(2+) is required as a cofactor.

It is found in the cytoplasm. The protein is Protein SprT of Erwinia tasmaniensis (strain DSM 17950 / CFBP 7177 / CIP 109463 / NCPPB 4357 / Et1/99).